The primary structure comprises 140 residues: Putative pre-16S rRNA nuclease (140 aa).

Belongs to the YqgF nuclease family.

The protein localises to the cytoplasm. In terms of biological role, could be a nuclease involved in processing of the 5'-end of pre-16S rRNA. This is Putative pre-16S rRNA nuclease from Aeromonas salmonicida (strain A449).